The primary structure comprises 599 residues: Elongation factor 4 (599 aa).

The 183-residue stretch at 3 to 185 folds into the tr-type G domain; it reads KNIRNFSIIA…AIVERIPPPS (183 aa). Residues 15-20 and 132-135 contribute to the GTP site; these read DHGKST and NKID.

Belongs to the TRAFAC class translation factor GTPase superfamily. Classic translation factor GTPase family. LepA subfamily.

The protein localises to the cell membrane. The catalysed reaction is GTP + H2O = GDP + phosphate + H(+). In terms of biological role, required for accurate and efficient protein synthesis under certain stress conditions. May act as a fidelity factor of the translation reaction, by catalyzing a one-codon backward translocation of tRNAs on improperly translocated ribosomes. Back-translocation proceeds from a post-translocation (POST) complex to a pre-translocation (PRE) complex, thus giving elongation factor G a second chance to translocate the tRNAs correctly. Binds to ribosomes in a GTP-dependent manner. This chain is Elongation factor 4, found in Syntrophomonas wolfei subsp. wolfei (strain DSM 2245B / Goettingen).